Here is a 195-residue protein sequence, read N- to C-terminus: Imidazoleglycerol-phosphate dehydratase (195 aa).

This sequence belongs to the imidazoleglycerol-phosphate dehydratase family.

Its subcellular location is the cytoplasm. It catalyses the reaction D-erythro-1-(imidazol-4-yl)glycerol 3-phosphate = 3-(imidazol-4-yl)-2-oxopropyl phosphate + H2O. The protein operates within amino-acid biosynthesis; L-histidine biosynthesis; L-histidine from 5-phospho-alpha-D-ribose 1-diphosphate: step 6/9. This chain is Imidazoleglycerol-phosphate dehydratase, found in Frankia casuarinae (strain DSM 45818 / CECT 9043 / HFP020203 / CcI3).